A 484-amino-acid chain; its full sequence is tRNA sulfurtransferase (484 aa).

The THUMP domain maps to 61 to 165 (ILLVELLGRI…NDKMMLIKAR (105 aa)). Residues 183–184 (LI), Lys265, Gly287, and Gln296 each bind ATP. Cys344 and Cys456 are oxidised to a cystine. Residues 404-484 (LSANDVILDI…DNVKVLNKIS (81 aa)) enclose the Rhodanese domain. Cys456 (cysteine persulfide intermediate) is an active-site residue.

This sequence belongs to the ThiI family.

It localises to the cytoplasm. It catalyses the reaction [ThiI sulfur-carrier protein]-S-sulfanyl-L-cysteine + a uridine in tRNA + 2 reduced [2Fe-2S]-[ferredoxin] + ATP + H(+) = [ThiI sulfur-carrier protein]-L-cysteine + a 4-thiouridine in tRNA + 2 oxidized [2Fe-2S]-[ferredoxin] + AMP + diphosphate. The catalysed reaction is [ThiS sulfur-carrier protein]-C-terminal Gly-Gly-AMP + S-sulfanyl-L-cysteinyl-[cysteine desulfurase] + AH2 = [ThiS sulfur-carrier protein]-C-terminal-Gly-aminoethanethioate + L-cysteinyl-[cysteine desulfurase] + A + AMP + 2 H(+). It functions in the pathway cofactor biosynthesis; thiamine diphosphate biosynthesis. Its function is as follows. Catalyzes the ATP-dependent transfer of a sulfur to tRNA to produce 4-thiouridine in position 8 of tRNAs, which functions as a near-UV photosensor. Also catalyzes the transfer of sulfur to the sulfur carrier protein ThiS, forming ThiS-thiocarboxylate. This is a step in the synthesis of thiazole, in the thiamine biosynthesis pathway. The sulfur is donated as persulfide by IscS. The chain is tRNA sulfurtransferase from Histophilus somni (strain 129Pt) (Haemophilus somnus).